A 232-amino-acid chain; its full sequence is uncharacterized protein (232 aa).

5 consecutive transmembrane segments (helical) span residues 4-24 (LLGVFFVPIIPFSFVVDYVFE), 42-62 (VLVGALGVGKAGTLLILLAVL), 100-120 (LFFISAFAIPLTVIHFLILHM), 145-165 (LAFVALVSSLVIAPAYAFFTL), and 171-191 (GNLILTPILLIEWLVWLWVGF).

The protein localises to the cell membrane. This is an uncharacterized protein from Aquifex aeolicus (strain VF5).